Here is a 226-residue protein sequence, read N- to C-terminus: Exopolysaccharide production protein ExoY (226 aa).

Residues 34–54 traverse the membrane as a helical segment; sequence VLIAILALIALSPLFLLVMGL.

It belongs to the bacterial sugar transferase family.

The protein localises to the cell membrane. It functions in the pathway glycan metabolism; exopolysaccharide biosynthesis. Functionally, needed for the addition of the first sugar (galactose) to the isoprenoid carrier. May function as a sugar transferase. The polypeptide is Exopolysaccharide production protein ExoY (exoY) (Sinorhizobium fredii (strain NBRC 101917 / NGR234)).